The sequence spans 219 residues: Ribose-5-phosphate isomerase A (219 aa).

Residues 28-31 (TGST), 81-84 (DGAD), and 94-97 (KGGG) each bind substrate. Glu103 acts as the Proton acceptor in catalysis. Residue Lys121 coordinates substrate.

This sequence belongs to the ribose 5-phosphate isomerase family. As to quaternary structure, homodimer.

It catalyses the reaction aldehydo-D-ribose 5-phosphate = D-ribulose 5-phosphate. The protein operates within carbohydrate degradation; pentose phosphate pathway; D-ribose 5-phosphate from D-ribulose 5-phosphate (non-oxidative stage): step 1/1. In terms of biological role, catalyzes the reversible conversion of ribose-5-phosphate to ribulose 5-phosphate. The protein is Ribose-5-phosphate isomerase A of Shigella boydii serotype 18 (strain CDC 3083-94 / BS512).